Consider the following 344-residue polypeptide: N-acetyl-gamma-glutamyl-phosphate reductase (344 aa).

C150 is a catalytic residue.

The protein belongs to the NAGSA dehydrogenase family. Type 1 subfamily.

Its subcellular location is the cytoplasm. The enzyme catalyses N-acetyl-L-glutamate 5-semialdehyde + phosphate + NADP(+) = N-acetyl-L-glutamyl 5-phosphate + NADPH + H(+). Its pathway is amino-acid biosynthesis; L-arginine biosynthesis; N(2)-acetyl-L-ornithine from L-glutamate: step 3/4. Functionally, catalyzes the NADPH-dependent reduction of N-acetyl-5-glutamyl phosphate to yield N-acetyl-L-glutamate 5-semialdehyde. The polypeptide is N-acetyl-gamma-glutamyl-phosphate reductase (Pseudomonas paraeruginosa (strain DSM 24068 / PA7) (Pseudomonas aeruginosa (strain PA7))).